The primary structure comprises 335 residues: Urokinase plasminogen activator surface receptor (335 aa).

Residues 1 to 22 (MGHPLLLPLLLLLHTCVPASWG) form the signal peptide. UPAR/Ly6 domains are found at residues 23–114 (LRCM…RSRY), 115–213 (LECI…PQNG), and 214–305 (HQCY…YRKG). 3 disulfides stabilise this stretch: Cys25-Cys46, Cys28-Cys34, and Cys39-Cys67. Asn74 carries N-linked (GlcNAc...) asparagine glycosylation. 11 disulfide bridges follow: Cys93-Cys98, Cys117-Cys144, Cys120-Cys127, Cys137-Cys169, Cys175-Cys192, Cys193-Cys198, Cys216-Cys244, Cys219-Cys227, Cys237-Cys263, Cys269-Cys287, and Cys288-Cys293. Residues Asn184, Asn194, Asn222, and Asn255 are each glycosylated (N-linked (GlcNAc...) asparagine). Gly305 carries the GPI-anchor amidated glycine lipid modification. Positions 306–335 (AAPQPGPAHLSLTITLLMTARLWGGTLLWT) are cleaved as a propeptide — removed in mature form.

Monomer. Interacts (via the UPAR/Ly6 domains) with SRPX2. Interacts with MRC2. Interacts with FAP (seprase); the interaction occurs at the cell surface of invadopodia membrane. Interacts with SORL1 (via N-terminal ectodomain); this interaction decreases PLAUR internalization. The ternary complex composed of PLAUR-PLAU-SERPINE1 also interacts with SORL1.

The protein resides in the cell membrane. It is found in the cell projection. Its subcellular location is the invadopodium membrane. Acts as a receptor for urokinase plasminogen activator. Plays a role in localizing and promoting plasmin formation. Mediates the proteolysis-independent signal transduction activation effects of U-PA. It is subject to negative-feedback regulation by U-PA which cleaves it into an inactive form. The polypeptide is Urokinase plasminogen activator surface receptor (PLAUR) (Chlorocebus aethiops (Green monkey)).